Reading from the N-terminus, the 411-residue chain is UPF0597 protein Fnod_1278 (411 aa).

The protein belongs to the UPF0597 family.

The sequence is that of UPF0597 protein Fnod_1278 from Fervidobacterium nodosum (strain ATCC 35602 / DSM 5306 / Rt17-B1).